Here is a 526-residue protein sequence, read N- to C-terminus: MVNEGPNQEESDDTPVPESALQADPSVSVHPSVSVHPSVSINPSVSVHPSSSAHPSALAQPSGLAHPSSSGPEDLSVIKVSRRRWAVVLVFSCYSMCNSFQWIQYGSINNIFMHFYGVSAFAIDWLSMCYMLTYIPLLLPVAWLLEKFGLRTIALTGSALNCLGAWVKLGSLKPHLFPVTVVGQLICSVAQVFILGMPSRIASVWFGANEVSTACSVAVFGNQLGIAIGFLVPPVLVPNIEDRDELAYHISIMFYIIGGVATLLLILVIIVFKEKPKYPPSRAQSLSYALTSPDASYLGSIARLFKNLNFVLLVITYGLNAGAFYALSTLLNRMVIWHYPGEEVNAGRIGLTIVIAGMLGAVISGIWLDRSKTYKETTLVVYIMTLVGMVVYTFTLNLGHLWVVFITAGTMGFFMTGYLPLGFEFAVELTYPESEGISSGLLNISAQVFGIIFTISQGQIIDNYGTKPGNIFLCVFLTLGAALTAFIKADLRRQKANKETLENKLQEEEEESNTSKVPTAVSEDHL.

Residues Met1 to Ser70 are disordered. Residues Met1–Ser76 lie on the Cytoplasmic side of the membrane. Met1–Arg84 is a heme b binding site. Tandem repeats lie at residues Pro25 to His30, Pro31 to His36, Pro37 to Asn42, Pro43 to His48, and Pro49 to His54. Positions Pro25–Ser56 are enriched in low complexity. Residues Pro25–Pro72 form an 8 X 6 AA tandem repeats of P-S-[VS]-S-[VIAG]-[HNP] region. Residues Pro55 to Gln60 form a 6; approximate repeat. Residues Pro61–His66 form a 7; approximate repeat. Repeat 8 spans residues Pro67 to Pro72. A helical membrane pass occupies residues Val77 to Gln101. The choline site is built by Asn98 and Trp102. The Extracellular portion of the chain corresponds to Trp102–Ser119. A helical membrane pass occupies residues Ala120 to Lys147. At Phe148–Gly149 the chain is on the cytoplasmic side. The helical transmembrane segment at Leu150 to Leu169 threads the bilayer. Residues Gly170 to Leu176 are Extracellular-facing. A helical membrane pass occupies residues Phe177–Trp205. The choline site is built by Gln191 and Leu195. The Cytoplasmic portion of the chain corresponds to Phe206–Glu210. The chain crosses the membrane as a helical span at residues Val211–Leu236. Topologically, residues Val237 to Glu241 are extracellular. Residues Asp242–Val271 form a helical membrane-spanning segment. The Cytoplasmic portion of the chain corresponds to Phe272–Asn307. A helical membrane pass occupies residues Leu308–His338. Tyr325 provides a ligand contact to choline. The Extracellular segment spans residues Tyr339 to Glu342. Residues Glu343–Ser371 traverse the membrane as a helical segment. Topologically, residues Lys372–Thr373 are cytoplasmic. Residues Tyr374 to Leu396 form a helical membrane-spanning segment. Residues Asn397–Gly399 lie on the Extracellular side of the membrane. Residues His400–Leu429 traverse the membrane as a helical segment. Topologically, residues Thr430–Ile437 are cytoplasmic. A helical transmembrane segment spans residues Ser438 to Asn463. Gln447 serves as a coordination point for choline. Residues Tyr464–Gly465 lie on the Extracellular side of the membrane. A helical transmembrane segment spans residues Thr466 to Lys488. Residues Ala489 to Leu526 lie on the Cytoplasmic side of the membrane. The segment at Thr500 to Leu526 is disordered. Phosphoserine is present on Ser515.

This sequence belongs to the major facilitator superfamily. Feline leukemia virus subgroup C receptor (TC 2.A.1.28.1) family. In terms of assembly, interacts with components of electron transfer chain complexes III, IV and V including CYC1, NDUFA4, COX4I1, ATP5PD and ATP5F1C; these interactions occur in the absence of heme and are disrupted upon heme binding. Interacts with ATP2A2; this interaction occurs in the absence of heme and promotes ATP2A2 proteasomal degradation; the complex is dissociated upon heme binding. Interacts with HMOX1; this interaction is potentiated in the presence of heme. In terms of tissue distribution, expressed in non-hematopoietic tissues, with relative abundant expression in brain, placenta, lung, liver and kidney. Also expressed in hematopoietic tissues (fetal liver, spleen, lymph node, thymus, leukocytes and bone marrow). Found in acidophil cells of the pituitary that secrete growth hormone and prolactin (at protein level).

The protein localises to the cell membrane. Its subcellular location is the mitochondrion membrane. It is found in the endoplasmic reticulum membrane. It carries out the reaction choline(out) = choline(in). The catalysed reaction is ethanolamine(in) = ethanolamine(out). It catalyses the reaction heme b(in) = heme b(out). In terms of biological role, choline uniporter that specifically mediates choline uptake at the blood-brain-barrier. Responsible for the majority of choline uptake across the blood-brain-barrier from the circulation into the brain. Choline, a nutrient critical for brain development, is a precursor of phosphatidylcholine, as well as betaine. Also mediates transport of ethanolamine. Choline and ethanolamine transport is not coupled with proton transport and is exclusively driven by the choline gradient across the plasma membrane. However, the presence of an inwardly directed proton gradient enhances choline uptake. Also acts as a heme b transporter. Required to regulate mitochondrial respiration processes, ATP synthesis and thermogenesis. At low heme levels, interacts with components of electron transfer chain (ETC) complexes and ATP2A2, leading to ubiquitin-mediated degradation of ATP2A2 and inhibition of thermogenesis. Upon heme binding, dissociates from ETC complexes to allow switching from mitochondrial ATP synthesis to thermogenesis. The polypeptide is Choline/ethanolamine transporter FLVCR2 (Homo sapiens (Human)).